The chain runs to 503 residues: Aminoaldehyde dehydrogenase 1, peroxisomal (503 aa).

4 residues coordinate Na(+): Asn-27, Ile-28, Asp-99, and Leu-189. 238-245 contributes to the NAD(+) binding site; that stretch reads GSSATGSK. The active-site Proton acceptor is the Glu-260. NAD(+)-binding residues include Cys-294 and Glu-393. The active-site Nucleophile is Cys-294. The Microbody targeting signal signature appears at 501–503; the sequence is SKL.

The protein belongs to the aldehyde dehydrogenase family. In terms of assembly, forms homodimers.

Its subcellular location is the peroxisome. It carries out the reaction 3-aminopropanal + NAD(+) + H2O = beta-alanine + NADH + 2 H(+). The enzyme catalyses 4-aminobutanal + NAD(+) + H2O = 4-aminobutanoate + NADH + 2 H(+). It catalyses the reaction 4-guanidinobutanal + NAD(+) + H2O = 4-guanidinobutanoate + NADH + 2 H(+). The protein operates within amine and polyamine biosynthesis; betaine biosynthesis via choline pathway; betaine from betaine aldehyde: step 1/1. In terms of biological role, dehydrogenase that catalyzes the oxidation of several aminoaldehydes. Metabolizes and detoxifies aldehyde products of polyamine degradation to non-toxic amino acids. Catalyzes the oxidation of 3-aminopropanal to beta-alanine. Catalyzes the oxidation of 4-aminobutanal to 4-aminobutanoate. Catalyzes the oxidation of 4-guanidinobutanal to 4-guanidinobutanoate. This Pisum sativum (Garden pea) protein is Aminoaldehyde dehydrogenase 1, peroxisomal.